Here is a 355-residue protein sequence, read N- to C-terminus: Ribosomal RNA large subunit methyltransferase M (355 aa).

Residues serine 191, 224–227 (APGG), aspartate 243, aspartate 263, and aspartate 279 contribute to the S-adenosyl-L-methionine site. Lysine 308 (proton acceptor) is an active-site residue.

Belongs to the class I-like SAM-binding methyltransferase superfamily. RNA methyltransferase RlmE family. RlmM subfamily. Monomer.

Its subcellular location is the cytoplasm. The catalysed reaction is cytidine(2498) in 23S rRNA + S-adenosyl-L-methionine = 2'-O-methylcytidine(2498) in 23S rRNA + S-adenosyl-L-homocysteine + H(+). Its function is as follows. Catalyzes the 2'-O-methylation at nucleotide C2498 in 23S rRNA. The chain is Ribosomal RNA large subunit methyltransferase M from Stenotrophomonas maltophilia (strain R551-3).